The primary structure comprises 354 residues: DNA polymerase IV (354 aa).

Residues 6–187 (IIHIDCDCFY…LPVTKLHGVG (182 aa)) form the UmuC domain. Mg(2+) is bound by residues D10 and D105. E106 is a catalytic residue.

This sequence belongs to the DNA polymerase type-Y family. Monomer. Requires Mg(2+) as cofactor.

The protein localises to the cytoplasm. The catalysed reaction is DNA(n) + a 2'-deoxyribonucleoside 5'-triphosphate = DNA(n+1) + diphosphate. Functionally, poorly processive, error-prone DNA polymerase involved in untargeted mutagenesis. Copies undamaged DNA at stalled replication forks, which arise in vivo from mismatched or misaligned primer ends. These misaligned primers can be extended by PolIV. Exhibits no 3'-5' exonuclease (proofreading) activity. May be involved in translesional synthesis, in conjunction with the beta clamp from PolIII. The polypeptide is DNA polymerase IV (Pseudomonas syringae pv. syringae (strain B728a)).